Consider the following 515-residue polypeptide: GMP synthase [glutamine-hydrolyzing] (515 aa).

Residues 6–198 enclose the Glutamine amidotransferase type-1 domain; that stretch reads KVIIIDYGSQ…LFHVAKLKAD (193 aa). Residue cysteine 83 is the Nucleophile of the active site. Residues histidine 172 and glutamate 174 contribute to the active site. Residues 199-390 form the GMPS ATP-PPase domain; sequence WTMSSFVERA…LGLPDFIIWR (192 aa). 226 to 232 serves as a coordination point for ATP; it reads SGGIDST.

In terms of assembly, homodimer.

The catalysed reaction is XMP + L-glutamine + ATP + H2O = GMP + L-glutamate + AMP + diphosphate + 2 H(+). The protein operates within purine metabolism; GMP biosynthesis; GMP from XMP (L-Gln route): step 1/1. In terms of biological role, catalyzes the synthesis of GMP from XMP. The protein is GMP synthase [glutamine-hydrolyzing] of Nitratidesulfovibrio vulgaris (strain DP4) (Desulfovibrio vulgaris).